The following is a 372-amino-acid chain: Probable inactive receptor-like protein kinase At1g65250 (372 aa).

ATP-binding positions include 1 to 4 (MGWL) and lysine 38. The Protein kinase domain maps to 1–314 (MGWLRKKKKP…QERCQMKAFL (314 aa)). Residues tyrosine 128 and tyrosine 221 each carry the phosphotyrosine modification. The tract at residues 348-372 (SSSLSSGQTQLDSAQDISSTVVLSN) is disordered. Residues 354–372 (GQTQLDSAQDISSTVVLSN) show a composition bias toward polar residues.

It belongs to the protein kinase superfamily.

The protein is Probable inactive receptor-like protein kinase At1g65250 of Arabidopsis thaliana (Mouse-ear cress).